Here is a 150-residue protein sequence, read N- to C-terminus: uncharacterized protein (150 aa).

Transmembrane regions (helical) follow at residues 48 to 68 (LFLLLFVIPTITLTTLGCFLF), 89 to 109 (VFIFIDVFGLVVSVLFGYLLP), and 123 to 143 (REVFLSLAMIVIFANSVIFTL).

To M.pneumoniae MPN_085 central region.

The protein resides in the cell membrane. This is an uncharacterized protein from Mycoplasma pneumoniae (strain ATCC 29342 / M129 / Subtype 1) (Mycoplasmoides pneumoniae).